Consider the following 174-residue polypeptide: Protein-export protein SecB (174 aa).

It belongs to the SecB family. In terms of assembly, homotetramer, a dimer of dimers. One homotetramer interacts with 1 SecA dimer.

The protein localises to the cytoplasm. In terms of biological role, one of the proteins required for the normal export of preproteins out of the cell cytoplasm. It is a molecular chaperone that binds to a subset of precursor proteins, maintaining them in a translocation-competent state. It also specifically binds to its receptor SecA. This Ehrlichia ruminantium (strain Gardel) protein is Protein-export protein SecB.